The primary structure comprises 69 residues: Large ribosomal subunit protein bL31 (69 aa).

C16, C18, C37, and C40 together coordinate Zn(2+).

This sequence belongs to the bacterial ribosomal protein bL31 family. Type A subfamily. In terms of assembly, part of the 50S ribosomal subunit. Zn(2+) is required as a cofactor.

In terms of biological role, binds the 23S rRNA. The chain is Large ribosomal subunit protein bL31 from Teredinibacter turnerae (strain ATCC 39867 / T7901).